A 418-amino-acid polypeptide reads, in one-letter code: Geranylgeranyl pyrophosphate synthase (418 aa).

The span at 51 to 64 shows a compositional bias: polar residues; sequence TSSTGIPTSLNATP. The disordered stretch occupies residues 51–73; that stretch reads TSSTGIPTSLNATPTKPVLRPVP. Residues lysine 143, arginine 146, and histidine 175 each coordinate isopentenyl diphosphate. Residues aspartate 182 and aspartate 186 each coordinate Mg(2+). Arginine 191 provides a ligand contact to dimethylallyl diphosphate. Isopentenyl diphosphate is bound at residue arginine 192. Lysine 269, threonine 270, glutamine 305, lysine 322, and lysine 332 together coordinate dimethylallyl diphosphate.

The protein belongs to the FPP/GGPP synthase family. It depends on Mg(2+) as a cofactor.

The protein resides in the cytoplasm. The catalysed reaction is isopentenyl diphosphate + dimethylallyl diphosphate = (2E)-geranyl diphosphate + diphosphate. The enzyme catalyses isopentenyl diphosphate + (2E)-geranyl diphosphate = (2E,6E)-farnesyl diphosphate + diphosphate. It catalyses the reaction isopentenyl diphosphate + (2E,6E)-farnesyl diphosphate = (2E,6E,10E)-geranylgeranyl diphosphate + diphosphate. Its pathway is isoprenoid biosynthesis; farnesyl diphosphate biosynthesis; farnesyl diphosphate from geranyl diphosphate and isopentenyl diphosphate: step 1/1. It functions in the pathway isoprenoid biosynthesis; geranyl diphosphate biosynthesis; geranyl diphosphate from dimethylallyl diphosphate and isopentenyl diphosphate: step 1/1. It participates in isoprenoid biosynthesis; geranylgeranyl diphosphate biosynthesis; geranylgeranyl diphosphate from farnesyl diphosphate and isopentenyl diphosphate: step 1/1. Catalyzes the trans-addition of the three molecules of IPP onto DMAPP to form geranylgeranyl pyrophosphate. This is Geranylgeranyl pyrophosphate synthase (GGS) from Fusarium fujikuroi (Bakanae and foot rot disease fungus).